The following is a 354-amino-acid chain: N-acylethanolamine-hydrolyzing acid amidase (354 aa).

A signal peptide spans 1 to 22 (MRSPGIVLLLLLLLLLPPGAAP). N35 and N104 each carry an N-linked (GlcNAc...) asparagine glycan. The active-site Nucleophile is the C123. Residues N306, N312, and N352 are each glycosylated (N-linked (GlcNAc...) asparagine).

Belongs to the acid ceramidase family. Heterodimer of an alpha and a beta subunit, produced by autocatalytic cleavage. In terms of processing, N-glycosylated. Tunicamycin treatment causes a reduction in specific activity against N-palmitoylethanolamine. Post-translationally, autoproteolytic cleavage at pH 4.5 gives rise to the alpha and beta subunit. Cleavage gives rise to a conformation change that activates the enzyme. The same catalytic Cys residue mediates the autoproteolytic cleavage and subsequent hydrolysis of lipid substrates.

It localises to the lysosome. Its subcellular location is the membrane. The catalysed reaction is N-hexadecanoylethanolamine + H2O = ethanolamine + hexadecanoate. It carries out the reaction an N-(long-chain fatty acyl)ethanolamine + H2O = a long-chain fatty acid + ethanolamine. It catalyses the reaction N-dodecanoylethanolamine + H2O = dodecanoate + ethanolamine. The enzyme catalyses N-tetradecanoylethanolamine + H2O = tetradecanoate + ethanolamine. The catalysed reaction is an N-acylsphing-4-enine + H2O = sphing-4-enine + a fatty acid. It carries out the reaction N-hexadecanoylsphing-4-enine + H2O = sphing-4-enine + hexadecanoate. It catalyses the reaction N-dodecanoylsphing-4-enine + H2O = dodecanoate + sphing-4-enine. Its pathway is lipid metabolism; fatty acid metabolism. Functionally, degrades bioactive fatty acid amides to their corresponding acids, with the following preference: N-palmitoylethanolamine &gt; N-myristoylethanolamine &gt; N-stearoylethanolamine &gt; N-oleoylethanolamine &gt; N-linoleoylethanolamine &gt; N-arachidonoylethanolamine. The chain is N-acylethanolamine-hydrolyzing acid amidase from Cavia porcellus (Guinea pig).